Here is a 325-residue protein sequence, read N- to C-terminus: Lipoyl synthase (325 aa).

The disordered stretch occupies residues 1–33 (MATVIDTLKARGSEDRAARHPEKQNRPDTPVLR). Over residues 8-33 (LKARGSEDRAARHPEKQNRPDTPVLR) the composition is skewed to basic and acidic residues. Positions 64, 69, 75, 90, 94, 97, and 303 each coordinate [4Fe-4S] cluster. One can recognise a Radical SAM core domain in the interval 76 to 292 (WSQKHATMMI…EAIARAKGFL (217 aa)).

This sequence belongs to the radical SAM superfamily. Lipoyl synthase family. The cofactor is [4Fe-4S] cluster.

It is found in the cytoplasm. The catalysed reaction is [[Fe-S] cluster scaffold protein carrying a second [4Fe-4S](2+) cluster] + N(6)-octanoyl-L-lysyl-[protein] + 2 oxidized [2Fe-2S]-[ferredoxin] + 2 S-adenosyl-L-methionine + 4 H(+) = [[Fe-S] cluster scaffold protein] + N(6)-[(R)-dihydrolipoyl]-L-lysyl-[protein] + 4 Fe(3+) + 2 hydrogen sulfide + 2 5'-deoxyadenosine + 2 L-methionine + 2 reduced [2Fe-2S]-[ferredoxin]. Its pathway is protein modification; protein lipoylation via endogenous pathway; protein N(6)-(lipoyl)lysine from octanoyl-[acyl-carrier-protein]: step 2/2. In terms of biological role, catalyzes the radical-mediated insertion of two sulfur atoms into the C-6 and C-8 positions of the octanoyl moiety bound to the lipoyl domains of lipoate-dependent enzymes, thereby converting the octanoylated domains into lipoylated derivatives. The polypeptide is Lipoyl synthase (Caulobacter vibrioides (strain ATCC 19089 / CIP 103742 / CB 15) (Caulobacter crescentus)).